We begin with the raw amino-acid sequence, 681 residues long: Elongation factor G (681 aa).

A tr-type G domain is found at 5–279 (KNIRNIGIIA…SIVNFLPSPI (275 aa)). GTP is bound by residues 14–21 (AHVDAGKT), 82–86 (DTPGH), and 136–139 (NKLD).

This sequence belongs to the TRAFAC class translation factor GTPase superfamily. Classic translation factor GTPase family. EF-G/EF-2 subfamily.

The protein resides in the cytoplasm. In terms of biological role, catalyzes the GTP-dependent ribosomal translocation step during translation elongation. During this step, the ribosome changes from the pre-translocational (PRE) to the post-translocational (POST) state as the newly formed A-site-bound peptidyl-tRNA and P-site-bound deacylated tRNA move to the P and E sites, respectively. Catalyzes the coordinated movement of the two tRNA molecules, the mRNA and conformational changes in the ribosome. This chain is Elongation factor G, found in Carsonella ruddii (strain PV).